Consider the following 104-residue polypeptide: Large ribosomal subunit protein uL24 (104 aa).

It belongs to the universal ribosomal protein uL24 family. In terms of assembly, part of the 50S ribosomal subunit.

Functionally, one of two assembly initiator proteins, it binds directly to the 5'-end of the 23S rRNA, where it nucleates assembly of the 50S subunit. Its function is as follows. One of the proteins that surrounds the polypeptide exit tunnel on the outside of the subunit. In Brevibacillus brevis (strain 47 / JCM 6285 / NBRC 100599), this protein is Large ribosomal subunit protein uL24.